A 155-amino-acid polypeptide reads, in one-letter code: Ribosomal RNA large subunit methyltransferase H (155 aa).

S-adenosyl-L-methionine-binding positions include L72, G104, and 123–128; that span reads LAKITL.

Belongs to the RNA methyltransferase RlmH family. In terms of assembly, homodimer.

The protein localises to the cytoplasm. It carries out the reaction pseudouridine(1915) in 23S rRNA + S-adenosyl-L-methionine = N(3)-methylpseudouridine(1915) in 23S rRNA + S-adenosyl-L-homocysteine + H(+). In terms of biological role, specifically methylates the pseudouridine at position 1915 (m3Psi1915) in 23S rRNA. This Mycoplasma mycoides subsp. mycoides SC (strain CCUG 32753 / NCTC 10114 / PG1) protein is Ribosomal RNA large subunit methyltransferase H.